The following is a 1025-amino-acid chain: Exportin-T (1025 aa).

Belongs to the exportin family.

It is found in the nucleus. Its subcellular location is the cytoplasm. Functionally, tRNA nucleus export receptor which facilitates tRNA translocation across the nuclear pore complex. Involved in pre-tRNA splicing, probably by affecting the interaction of pre-tRNA with splicing endonuclease. This chain is Exportin-T (LOS1), found in Yarrowia lipolytica (strain CLIB 122 / E 150) (Yeast).